The following is a 620-amino-acid chain: Chaperone protein HscA homolog (620 aa).

Belongs to the heat shock protein 70 family.

In terms of biological role, chaperone involved in the maturation of iron-sulfur cluster-containing proteins. Has a low intrinsic ATPase activity which is markedly stimulated by HscB. This chain is Chaperone protein HscA homolog, found in Pseudomonas syringae pv. syringae (strain B728a).